The primary structure comprises 350 residues: Transmembrane protein 185B (350 aa).

A run of 7 helical transmembrane segments spans residues 16–36, 41–61, 81–101, 111–131, 168–188, 211–231, and 240–260; these read LIYT…DGII, WAVF…ASVG, FKAM…EVLV, FWLL…AACV, WLVV…VVLY, VTMA…EVLL, and TFSY…LMAT.

The protein belongs to the TMEM185 family.

It is found in the membrane. The protein is Transmembrane protein 185B (TMEM185B) of Homo sapiens (Human).